The sequence spans 1199 residues: MENTQKTVTVPTGPLGYVYACRVEDLDLEEISFLAARSTDSDLALLPLMRNLTVEKTFTSSLAVVSGARTTGLAGAGITLKLTTSHFYPSVFVFHGGKHVLPSSAAPNLTRACNAARERFGFSRCQGPPVDGAVETTGAEICTRLGLEPENTILYLVVTALFKEAVFMCNVFLHYGGLDIVHINHGDVIRIPLFPVQLFMPDVNRLVPDPFNTHHRSIGEGFVYPTPFYNTGLCHLIHDCVIAPMAVALRVRNVTAVARGAAHLAFDENHEGAVLPPDITYTYFQSSSSGTTTARGARRNDVNSTSKPSPSGGFERRLASIMAADTALHAEVIFNTGIYEETPTDIKEWPMFIGMEGTLPRLNALGSYTARVAGVIGAMVFSPNSALYLTEVEDSGMTEAKDGGPGPSFNRFYQFAGPHLAANPQTDRDGHVLSSQSTGSSNTEFSVDYLALICGFGAPLLARLLFYLERCDAGAFTGGHGDALKYVTGTFDSEIPCSLCEKHTRPVCAHTTVHRLRQRMPRFGQATRQPIGVFGTMNSQYSDCDPLGNYAPYLILRKPGDQTEAAKATMQDTYRATLERLFIDLEQERLLDRGAPCSSEGLSSVIVDHPTFRRILDTLRARIEQTTTQFMKVLVETRDYKIREGLSEATHSMALTFDPYSGAFCPITNFLVKRTHLAVVQDLALSQCHCVFYGQQVEGRNFRNQFQPVLRRRFVDLFNGGFISTRSITVTLSEGPVSAPNPTLGQDAPAGRTFDGDLARVSVEVIRDIRVKNRVVFSGNCTNLSEAARARLVGLASAYQRQEKRVDMLHGALGFLLKQFHGLLFPRGMPPNSKSPNPQWFWTLLQRNQMPADKLTHEEITTIAAVKRFTEEYAALNFINLPPTCIGELAQFYMANLILKYCDHSQYLINTLTSIITGARRPRDPSSVLHWIRKDVTSAADIETQAKALLEKTENLPELWTTAFTSTHLVRAAMNQRPMVVLGISISKYHGAAGNNRVFQAGNWSGLNGGKNVCPLFTFDRTRRFIITCPRGGFICPVTGPSSGNRETTLSDQVRGIIVSGGAMVQLAIYATVVRAVGARAQHMAFDDWLSLTDDEFLARDLEELHDQIIQTLETPWTVEGALEAVKILDEKTTAGDGETPTNLAFNFDSCEPSHDTTSNVLNISGSTVPGLKRPPEDDELFDLSGIPIKHGNITMEMI.

Residues 289-314 (SGTTTARGARRNDVNSTSKPSPSGGF) form a disordered region. A zinc finger lies at 497 to 510 (CSLCEKHTRPVCAH). Short sequence motifs (required for filament formation) lie at residues 841 to 842 (FW) and 1146 to 1148 (FNF). A required for nuclear localization region spans residues 1172–1199 (LKRPPEDDELFDLSGIPIKHGNITMEMI).

The protein belongs to the herpesviridae major DNA-binding protein family. In terms of assembly, homooligomers. Forms double-helical filaments necessary for the formation of replication compartments within the host nucleus. Interacts with the origin-binding protein. Interacts with the helicase primase complex; this interaction stimulates primer synthesis activity of the helicase-primase complex. Interacts with the DNA polymerase. Interacts with the alkaline exonuclease; this interaction increases its nuclease processivity.

The protein resides in the host nucleus. Its function is as follows. Plays several crucial roles in viral infection. Participates in the opening of the viral DNA origin to initiate replication by interacting with the origin-binding protein. May disrupt loops, hairpins and other secondary structures present on ssDNA to reduce and eliminate pausing of viral DNA polymerase at specific sites during elongation. Promotes viral DNA recombination by performing strand-transfer, characterized by the ability to transfer a DNA strand from a linear duplex to a complementary single-stranded DNA circle. Can also catalyze the renaturation of complementary single strands. Additionally, reorganizes the host cell nucleus, leading to the formation of prereplicative sites and replication compartments. This process is driven by the protein which can form double-helical filaments in the absence of DNA. The polypeptide is Major DNA-binding protein (Varicella-zoster virus (strain Oka vaccine) (HHV-3)).